Here is a 354-residue protein sequence, read N- to C-terminus: Histidinol-phosphate aminotransferase 1 (354 aa).

Lys209 is subject to N6-(pyridoxal phosphate)lysine.

Belongs to the class-II pyridoxal-phosphate-dependent aminotransferase family. Histidinol-phosphate aminotransferase subfamily. As to quaternary structure, homodimer. Pyridoxal 5'-phosphate is required as a cofactor.

It catalyses the reaction L-histidinol phosphate + 2-oxoglutarate = 3-(imidazol-4-yl)-2-oxopropyl phosphate + L-glutamate. It functions in the pathway amino-acid biosynthesis; L-histidine biosynthesis; L-histidine from 5-phospho-alpha-D-ribose 1-diphosphate: step 7/9. This Oceanobacillus iheyensis (strain DSM 14371 / CIP 107618 / JCM 11309 / KCTC 3954 / HTE831) protein is Histidinol-phosphate aminotransferase 1 (hisC1).